A 915-amino-acid polypeptide reads, in one-letter code: Clathrin coat assembly protein AP180 (915 aa).

An ENTH domain is found at 14–145 (QYSVTGSAVA…FSYRQMAFDF (132 aa)). 3 disordered regions span residues 285 to 326 (LEGK…DTSP), 391 to 425 (SVPS…ATTA), and 497 to 522 (PETS…PSPA). Ser-296, Ser-300, and Ser-306 each carry phosphoserine. Residues 302–324 (LSKSSPATTVTSPNSTPAKTIDT) are compositionally biased toward polar residues. Thr-310 carries an O-linked (GlcNAc) threonine glycan. The residue at position 313 (Ser-313) is a Phosphoserine. Position 317 is a phosphothreonine (Thr-317). Composition is skewed to low complexity over residues 410–425 (TTTT…ATTA) and 500–511 (SAPVVTPTASTA). Residues 512–522 (PPVPATAPSPA) are compositionally biased toward pro residues. Phosphoserine is present on residues Ser-594, Ser-600, Pro-627, Ser-640, and Ser-646. Residues 720–735 (TTPSTSSSSSFDPSGD) show a composition bias toward low complexity. The disordered stretch occupies residues 720–765 (TTPSTSSSSSFDPSGDLLMPTMAPSGQPAPVSMVPPSPAMSASKGL). Phosphoserine is present on Ser-775. Positions 817–855 (SAGVPPQGTVPPTSSVPPGAGAPSVGQPGAGYGMPPAGT) are disordered. An Asymmetric dimethylarginine; alternate modification is found at Arg-873. Arg-873 is modified (omega-N-methylarginine; alternate). The disordered stretch occupies residues 875 to 915 (PFGAAAVPGTQLSPSPTPATQSPKKPPAKDPLADLNIKDFL). Residues 884-896 (TQLSPSPTPATQS) show a composition bias toward polar residues. Over residues 901-915 (PAKDPLADLNIKDFL) the composition is skewed to basic and acidic residues.

Belongs to the PICALM/SNAP91 family. Binds AP2A2. Interacts with AP2B1; clathrin competes with SNAP91. Post-translationally, thr-310 can be modified by the addition of N-acetylglucosamine which can be further phosphorylated. The form with phosphorylated O-linked N-acetylglucosamine is predominant in brain synaptosomes. There is no evidence for direct Thr-310 phosphorylation.

Its subcellular location is the cell membrane. It localises to the membrane. It is found in the coated pit. Adaptins are components of the adapter complexes which link clathrin to receptors in coated vesicles. Clathrin-associated protein complexes are believed to interact with the cytoplasmic tails of membrane proteins, leading to their selection and concentration. Binding of AP180 to clathrin triskelia induces their assembly into 60-70 nm coats. This Rattus norvegicus (Rat) protein is Clathrin coat assembly protein AP180 (Snap91).